Here is a 249-residue protein sequence, read N- to C-terminus: tRNA (guanine-N(7)-)-methyltransferase (249 aa).

The S-adenosyl-L-methionine site is built by Glu80, Glu105, Asp132, and Asp155. The active site involves Asp155. Substrate contacts are provided by residues Lys159, Asp191, and 228–231 (TKFE).

This sequence belongs to the class I-like SAM-binding methyltransferase superfamily. TrmB family.

It catalyses the reaction guanosine(46) in tRNA + S-adenosyl-L-methionine = N(7)-methylguanosine(46) in tRNA + S-adenosyl-L-homocysteine. Its pathway is tRNA modification; N(7)-methylguanine-tRNA biosynthesis. Its function is as follows. Catalyzes the formation of N(7)-methylguanine at position 46 (m7G46) in tRNA. The protein is tRNA (guanine-N(7)-)-methyltransferase of Mannheimia succiniciproducens (strain KCTC 0769BP / MBEL55E).